The chain runs to 345 residues: N-acetyl-gamma-glutamyl-phosphate reductase (345 aa).

Cysteine 149 is a catalytic residue.

Belongs to the NAGSA dehydrogenase family. Type 1 subfamily.

The protein localises to the cytoplasm. The catalysed reaction is N-acetyl-L-glutamate 5-semialdehyde + phosphate + NADP(+) = N-acetyl-L-glutamyl 5-phosphate + NADPH + H(+). It participates in amino-acid biosynthesis; L-arginine biosynthesis; N(2)-acetyl-L-ornithine from L-glutamate: step 3/4. Its function is as follows. Catalyzes the NADPH-dependent reduction of N-acetyl-5-glutamyl phosphate to yield N-acetyl-L-glutamate 5-semialdehyde. This chain is N-acetyl-gamma-glutamyl-phosphate reductase, found in Herminiimonas arsenicoxydans.